A 207-amino-acid chain; its full sequence is dTTP/UTP pyrophosphatase (207 aa).

Asp68 acts as the Proton acceptor in catalysis.

The protein belongs to the Maf family. YhdE subfamily. A divalent metal cation is required as a cofactor.

The protein localises to the cytoplasm. The catalysed reaction is dTTP + H2O = dTMP + diphosphate + H(+). It catalyses the reaction UTP + H2O = UMP + diphosphate + H(+). Nucleoside triphosphate pyrophosphatase that hydrolyzes dTTP and UTP. May have a dual role in cell division arrest and in preventing the incorporation of modified nucleotides into cellular nucleic acids. The chain is dTTP/UTP pyrophosphatase from Staphylothermus marinus (strain ATCC 43588 / DSM 3639 / JCM 9404 / F1).